An 85-amino-acid polypeptide reads, in one-letter code: Small ribosomal subunit protein eS27 (85 aa).

The segment at 38 to 60 (CHGCRTITTVFSHAQNVVICSSC) adopts a C4-type zinc-finger fold.

The protein belongs to the eukaryotic ribosomal protein eS27 family. The cofactor is Zn(2+).

This is Small ribosomal subunit protein eS27 (rps27) from Dictyostelium discoideum (Social amoeba).